The following is an 850-amino-acid chain: Tripartite terminase subunit 1 (850 aa).

Residues 191-219 (CAQCYEELTIIPNQGRSLNKRLQGLLCNH) form a C3H1-type zinc finger. Residues 438 to 489 (GTTLMTASNSSNSSTHSQRNNGGGGRARGGGKKVVGGGVNGQDGDGSENGLR) are disordered. Residues 439-457 (TTLMTASNSSNSSTHSQRN) are compositionally biased toward low complexity. Residues 458 to 481 (NGGGGRARGGGKKVVGGGVNGQDG) are compositionally biased toward gly residues. 709–716 (YNETFGKQ) is a binding site for ATP. Positions 801–831 (WLPSPYPSSSTAGVSRRVRATRKRPRRASSL) are disordered. Over residues 816–827 (RRVRATRKRPRR) the composition is skewed to basic residues. The Nuclear localization signal signature appears at 822 to 827 (RKRPRR).

The protein belongs to the herpesviridae TRM1 protein family. Associates with TRM2 and TRM3 to form the tripartite terminase complex. Interacts with portal protein.

Its subcellular location is the host nucleus. Functionally, component of the molecular motor that translocates viral genomic DNA in empty capsid during DNA packaging. Forms a tripartite terminase complex together with TRM2 and TRM3 in the host cytoplasm. Once the complex reaches the host nucleus, it interacts with the capsid portal vertex. This portal forms a ring in which genomic DNA is translocated into the capsid. TRM1 carries an endonuclease activity that plays an important role for the cleavage of concatemeric viral DNA into unit length genomes. This is Tripartite terminase subunit 1 from Homo sapiens (Human).